The sequence spans 176 residues: UPF0098 protein Rv2140c (176 aa).

T2 carries the post-translational modification N-acetylthreonine.

It belongs to the UPF0098 family.

This Mycobacterium tuberculosis (strain ATCC 25618 / H37Rv) protein is UPF0098 protein Rv2140c.